Consider the following 244-residue polypeptide: Phosphoadenosine 5'-phosphosulfate reductase (244 aa).

The active-site Nucleophile; cysteine thiosulfonate intermediate is C239.

This sequence belongs to the PAPS reductase family. CysH subfamily.

The protein localises to the cytoplasm. It carries out the reaction [thioredoxin]-disulfide + sulfite + adenosine 3',5'-bisphosphate + 2 H(+) = [thioredoxin]-dithiol + 3'-phosphoadenylyl sulfate. The protein operates within sulfur metabolism; hydrogen sulfide biosynthesis; sulfite from sulfate: step 3/3. Functionally, catalyzes the formation of sulfite from phosphoadenosine 5'-phosphosulfate (PAPS) using thioredoxin as an electron donor. The chain is Phosphoadenosine 5'-phosphosulfate reductase from Buchnera aphidicola subsp. Acyrthosiphon pisum (strain 5A).